A 67-amino-acid chain; its full sequence is UPF0434 protein Bphy_0537 (67 aa).

It belongs to the UPF0434 family.

The chain is UPF0434 protein Bphy_0537 from Paraburkholderia phymatum (strain DSM 17167 / CIP 108236 / LMG 21445 / STM815) (Burkholderia phymatum).